The primary structure comprises 66 residues: uncharacterized protein (66 aa).

The segment covering 1–20 (MTIINSISNFGSNNSFSNNN) has biased composition (low complexity). Positions 1-47 (MTIINSISNFGSNNSFSNNNTVNQKSVIKRSKQMKNDNTSIGSSFKN) are disordered. The span at 36–47 (NDNTSIGSSFKN) shows a compositional bias: polar residues.

This is an uncharacterized protein from Dictyostelium discoideum (Social amoeba).